We begin with the raw amino-acid sequence, 157 residues long: Protein Smg (157 aa).

This sequence belongs to the Smg family.

The protein is Protein Smg of Buchnera aphidicola subsp. Schizaphis graminum (strain Sg).